The following is a 145-amino-acid chain: Flagellar assembly factor FliW (145 aa).

Belongs to the FliW family. Interacts with translational regulator CsrA and flagellin(s).

It is found in the cytoplasm. In terms of biological role, acts as an anti-CsrA protein, binds CsrA and prevents it from repressing translation of its target genes, one of which is flagellin. Binds to flagellin and participates in the assembly of the flagellum. This chain is Flagellar assembly factor FliW, found in Exiguobacterium sp. (strain ATCC BAA-1283 / AT1b).